A 526-amino-acid chain; its full sequence is Thioredoxin reductase 2, mitochondrial (526 aa).

A mitochondrion-targeting transit peptide spans 1–36 (MAAIVAALRGSSGRFRPQTRVLTRGTRGAAGAASAA). 43 to 72 (DLLVIGGGSGGLACAKEAAQLGRKVAVADY) serves as a coordination point for FAD. Lysine 81 is subject to N6-succinyllysine. Cysteine 88 and cysteine 93 form a disulfide bridge. Lysine 177 and lysine 331 each carry N6-succinyllysine. The active-site Proton acceptor is the histidine 499. The segment at residues 524 to 525 (CU) is a cross-link (cysteinyl-selenocysteine (Cys-Sec)). Position 525 (selenocysteine 525) is a non-standard amino acid, selenocysteine.

It belongs to the class-I pyridine nucleotide-disulfide oxidoreductase family. In terms of assembly, homodimer. FAD is required as a cofactor. As to expression, expressed in liver, kidney, adrenal gland and heart.

It is found in the mitochondrion. It catalyses the reaction [thioredoxin]-dithiol + NADP(+) = [thioredoxin]-disulfide + NADPH + H(+). Its function is as follows. Involved in the control of reactive oxygen species levels and the regulation of mitochondrial redox homeostasis. Maintains mitochondrial thioredoxin in a reduced state. May play a role in redox-regulated cell signaling. The sequence is that of Thioredoxin reductase 2, mitochondrial (Txnrd2) from Rattus norvegicus (Rat).